The primary structure comprises 106 residues: Urease subunit beta (106 aa).

Belongs to the urease beta subunit family. In terms of assembly, heterotrimer of UreA (gamma), UreB (beta) and UreC (alpha) subunits. Three heterotrimers associate to form the active enzyme.

The protein localises to the cytoplasm. It carries out the reaction urea + 2 H2O + H(+) = hydrogencarbonate + 2 NH4(+). It functions in the pathway nitrogen metabolism; urea degradation; CO(2) and NH(3) from urea (urease route): step 1/1. The protein is Urease subunit beta of Citrobacter koseri (strain ATCC BAA-895 / CDC 4225-83 / SGSC4696).